Consider the following 63-residue polypeptide: Beta-defensin 4 (63 aa).

The signal sequence occupies residues 1 to 22 (MRIHYLLFTFLLVLLSPLAAFT). A Pyrrolidone carboxylic acid modification is found at Q23. 3 cysteine pairs are disulfide-bonded: C31–C59, C38–C52, and C42–C60.

It belongs to the beta-defensin family. As to expression, tongue, esophagus and trachea.

It is found in the secreted. Its function is as follows. Exhibits antimicrobial activity against Gram-negative bacteria and Gram-positive bacteria. May act as a ligand for C-C chemokine receptor CCR6. Can bind to mouse (but not human) CCR6 and induce chemotactic activity of CCR6-expressing cells. In Mus musculus (Mouse), this protein is Beta-defensin 4 (Defb4).